The following is a 126-amino-acid chain: Ribonuclease P protein component (126 aa).

This sequence belongs to the RnpA family. In terms of assembly, consists of a catalytic RNA component (M1 or rnpB) and a protein subunit.

It carries out the reaction Endonucleolytic cleavage of RNA, removing 5'-extranucleotides from tRNA precursor.. In terms of biological role, RNaseP catalyzes the removal of the 5'-leader sequence from pre-tRNA to produce the mature 5'-terminus. It can also cleave other RNA substrates such as 4.5S RNA. The protein component plays an auxiliary but essential role in vivo by binding to the 5'-leader sequence and broadening the substrate specificity of the ribozyme. This is Ribonuclease P protein component from Brevibacillus brevis (strain 47 / JCM 6285 / NBRC 100599).